The chain runs to 335 residues: MSQILFKTKTFWYGIALTFCIATLSYFLAKLPFLMILGQLVTAILIGIIIRALFPVPEKWFTGIQFSNKVILRAGIILLGFRLNLVDIYHAGWRVFLIAALCLSFGITIVYFLAKLFGVDKKLAILVACGTGICGAAAVVAISPQVKADNNQTAVAATIIALLGTIFTVIYTLIYPILPLGPDGYGIFAGATLHEIAHVIAAADPGGSSAVDMAVIVKLTRVALLVPVCFVVAKMVNAGTKNRFSWAELPVPWFIFGFLATSAINSFGIIPTSVTDFLVICAYFLIAMSMGGLGLNVHLPSFGKMGGKPFAAALIGSVFLSAFGLALVLLFHLAG.

8 helical membrane-spanning segments follow: residues 10 to 28 (TFWY…SYFL), 33 to 55 (FLMI…ALFP), 91 to 113 (AGWR…VYFL), 123 to 142 (LAIL…VVAI), 155 to 177 (VAAT…IYPI), 251 to 270 (VPWF…FGII), 277 to 299 (FLVI…NVHL), and 309 to 331 (PFAA…VLLF).

This sequence belongs to the UPF0324 family.

It is found in the cell membrane. The chain is UPF0324 membrane protein LMOf2365_2179 from Listeria monocytogenes serotype 4b (strain F2365).